Reading from the N-terminus, the 141-residue chain is Flagellar assembly factor FliW (141 aa).

Belongs to the FliW family. In terms of assembly, interacts with translational regulator CsrA and flagellin(s).

The protein localises to the cytoplasm. In terms of biological role, acts as an anti-CsrA protein, binds CsrA and prevents it from repressing translation of its target genes, one of which is flagellin. Binds to flagellin and participates in the assembly of the flagellum. In Clostridium acetobutylicum (strain ATCC 824 / DSM 792 / JCM 1419 / IAM 19013 / LMG 5710 / NBRC 13948 / NRRL B-527 / VKM B-1787 / 2291 / W), this protein is Flagellar assembly factor FliW.